The following is an 85-amino-acid chain: Large ribosomal subunit protein bL27 (85 aa).

The tract at residues 1-22 (MAHKKGQGSSRNGRDSPGQHRG) is disordered.

It belongs to the bacterial ribosomal protein bL27 family.

The sequence is that of Large ribosomal subunit protein bL27 from Anaeromyxobacter sp. (strain Fw109-5).